The chain runs to 408 residues: GTPase Obg (408 aa).

The Obg domain maps to 1–159; that stretch reads MKFVDEVSIR…RDLKMEMKVL (159 aa). The segment at 127-148 is disordered; sequence NTRFKSSTNRAPRQTTPGKPGE. The segment covering 129 to 143 has biased composition (polar residues); it reads RFKSSTNRAPRQTTP. The region spanning 160-333 is the OBG-type G domain; that stretch reads ADVGLLGLPN…LSHDLMRYLE (174 aa). Residues 166 to 173, 191 to 195, 213 to 216, 283 to 286, and 314 to 316 each bind GTP; these read GLPNAGKS, FTTLV, DIPG, NKAD, and SAI. Positions 173 and 193 each coordinate Mg(2+). The segment covering 385–401 has biased composition (acidic residues); that stretch reads GDDDGWDDDFEDDEDGP. Residues 385 to 408 are disordered; it reads GDDDGWDDDFEDDEDGPEIIYVRD.

Belongs to the TRAFAC class OBG-HflX-like GTPase superfamily. OBG GTPase family. In terms of assembly, monomer. It depends on Mg(2+) as a cofactor.

Its subcellular location is the cytoplasm. In terms of biological role, an essential GTPase which binds GTP, GDP and possibly (p)ppGpp with moderate affinity, with high nucleotide exchange rates and a fairly low GTP hydrolysis rate. Plays a role in control of the cell cycle, stress response, ribosome biogenesis and in those bacteria that undergo differentiation, in morphogenesis control. The polypeptide is GTPase Obg (Pseudomonas putida (strain ATCC 700007 / DSM 6899 / JCM 31910 / BCRC 17059 / LMG 24140 / F1)).